Reading from the N-terminus, the 315-residue chain is Ribose-phosphate pyrophosphokinase (315 aa).

Residues 37-39 and 96-97 contribute to the ATP site; these read DGE and RQ. The Mg(2+) site is built by histidine 131 and aspartate 170. The active site involves lysine 194. D-ribose 5-phosphate contacts are provided by residues arginine 196, aspartate 220, and 224 to 228; that span reads DTGGT.

The protein belongs to the ribose-phosphate pyrophosphokinase family. Class I subfamily. In terms of assembly, homohexamer. Requires Mg(2+) as cofactor.

The protein localises to the cytoplasm. It catalyses the reaction D-ribose 5-phosphate + ATP = 5-phospho-alpha-D-ribose 1-diphosphate + AMP + H(+). The protein operates within metabolic intermediate biosynthesis; 5-phospho-alpha-D-ribose 1-diphosphate biosynthesis; 5-phospho-alpha-D-ribose 1-diphosphate from D-ribose 5-phosphate (route I): step 1/1. In terms of biological role, involved in the biosynthesis of the central metabolite phospho-alpha-D-ribosyl-1-pyrophosphate (PRPP) via the transfer of pyrophosphoryl group from ATP to 1-hydroxyl of ribose-5-phosphate (Rib-5-P). The polypeptide is Ribose-phosphate pyrophosphokinase (Shewanella oneidensis (strain ATCC 700550 / JCM 31522 / CIP 106686 / LMG 19005 / NCIMB 14063 / MR-1)).